The following is a 459-amino-acid chain: Methionine aminopeptidase 2-2 (459 aa).

Basic and acidic residues predominate over residues 1 to 12 (MGSKSPEDHRQG). The segment at 1–87 (MGSKSPEDHR…KKLSVVQQTS (87 aa)) is disordered. Acidic residues predominate over residues 43-54 (GQDEDGDDDDDE). The segment covering 55 to 66 (KTGIDLKTNDGA) has biased composition (basic and acidic residues). The segment covering 67–79 (KKKRKRNKKKSKK) has biased composition (basic residues). Residue His-210 coordinates substrate. Asp-231, Asp-242, and His-311 together coordinate a divalent metal cation. His-319 is a binding site for substrate. The a divalent metal cation site is built by Glu-344 and Glu-440.

Belongs to the peptidase M24A family. Methionine aminopeptidase eukaryotic type 2 subfamily. It depends on Co(2+) as a cofactor. Zn(2+) is required as a cofactor. Mn(2+) serves as cofactor. Requires Fe(2+) as cofactor.

The protein resides in the cytoplasm. The catalysed reaction is Release of N-terminal amino acids, preferentially methionine, from peptides and arylamides.. Its function is as follows. Cotranslationally removes the N-terminal methionine from nascent proteins. The N-terminal methionine is often cleaved when the second residue in the primary sequence is small and uncharged (Met-Ala-, Cys, Gly, Pro, Ser, Thr, or Val). In Pyrenophora teres f. teres (strain 0-1) (Barley net blotch fungus), this protein is Methionine aminopeptidase 2-2.